The primary structure comprises 57 residues: MTEVRLGENESIESALKRFKKKIQKAGILSEIKRRERYEKPSARRKRKAEAARKRRR.

The segment at 37-57 (RYEKPSARRKRKAEAARKRRR) is disordered. A compositionally biased stretch (basic residues) spans 43-57 (ARRKRKAEAARKRRR).

It belongs to the bacterial ribosomal protein bS21 family.

In Gloeobacter violaceus (strain ATCC 29082 / PCC 7421), this protein is Small ribosomal subunit protein bS21B.